A 65-amino-acid chain; its full sequence is Large ribosomal subunit protein bL35 (65 aa).

It belongs to the bacterial ribosomal protein bL35 family.

This chain is Large ribosomal subunit protein bL35, found in Prochlorococcus marinus subsp. pastoris (strain CCMP1986 / NIES-2087 / MED4).